Reading from the N-terminus, the 103-residue chain is Small ribosomal subunit protein uS10 (103 aa).

It belongs to the universal ribosomal protein uS10 family. Part of the 30S ribosomal subunit.

Its function is as follows. Involved in the binding of tRNA to the ribosomes. The chain is Small ribosomal subunit protein uS10 from Tolumonas auensis (strain DSM 9187 / NBRC 110442 / TA 4).